Here is a 547-residue protein sequence, read N- to C-terminus: MAADEARSVSRLHSEEDMHGKHHSTLWGDFFLHHVPCRPGQYSIMKDNVKIMKEEVKKMLLDVGSSDLSHKLECIDTLERLGLDYHYTKEIDELMCNVFEARDQDLDLTTTSQLFYLLRKHGYHVSSDVFLKFGDDKGDIVTDDARCLLRMYEAAHVRVNGEEILDNILIHTKRQLQCIVDDLEPTLQEEVRYALETPLFRRLNRVQARQFISTYEKSTTRNNMLLEFSKLDFNILLTLYCEELKDLTMWWKEFQAQANTAIYARDRMVEMHFWMMGVFFEPQYSYSRKMLTQLFMIVSVLDDLYDSHCTTEEGNAFTAALQRWDEEGVEQCPTYLRTLYTNIRATVKAIEEDLNLQNNKHAKLVKGLIIDMAMCYNAETEWRDKKYVPATVDEHLKISARSSGCMHLVSQGFISMGDVATSEALEWASTYPKIVRAVCIIARLANDIMSYKREASNNTMVSTVQTCAKEYGTTTVEQAIEKIRELIEEAWMDITHECLRQPQPMALLERAVNLARTMDFLYKDVDGYTDSRSIKGILDSLYVDIID.

Mg(2+) contacts are provided by Asp-302 and Asp-306. Residues Asp-302, Asp-306, Arg-443, and Asn-446 each coordinate substrate. A DDXXD motif motif is present at residues 302–306; the sequence is DDLYD. Mg(2+) is bound by residues Asn-446 and Glu-454.

This sequence belongs to the terpene synthase family. In terms of assembly, monomer. Mg(2+) serves as cofactor. It depends on Mn(2+) as a cofactor.

Its subcellular location is the cytoplasm. It catalyses the reaction (2E,6E)-farnesyl diphosphate = (-)-(E)-beta-caryophyllene + diphosphate. The protein operates within secondary metabolite biosynthesis; terpenoid biosynthesis. Functionally, component of the volatile terpenes biosynthesis pathways. Sesquiterpene synthase that converts farnesyl diphosphate to (E)-beta-caryophyllene. Involved in indirect defense by producing volatile signals attracting natural enemies of herbivores. The polypeptide is (E)-beta-caryophyllene synthase (Zea mays (Maize)).